The following is a 263-amino-acid chain: Phosphatidylglycerol--prolipoprotein diacylglyceryl transferase (263 aa).

Transmembrane regions (helical) follow at residues 6-26 (VIFSIGPVSIYWYSLAYVLGI), 50-70 (LLTAVIIGIILGGRLGYVLIY), 85-105 (TWEGGMSFHGGAIGVLLAVII), and 112-132 (IPIFYTLDLISCGVPIGLLLG). R133 is an a 1,2-diacyl-sn-glycero-3-phospho-(1'-sn-glycerol) binding site. Transmembrane regions (helical) follow at residues 169–189 (LYEAFFEGALLFVVVNSLFYL), 197–217 (GATTGVAVMLYGVARFMVEFF), and 233–253 (MGQLLSIPMILLGMLIYLGAL).

This sequence belongs to the Lgt family.

It localises to the cell membrane. The catalysed reaction is L-cysteinyl-[prolipoprotein] + a 1,2-diacyl-sn-glycero-3-phospho-(1'-sn-glycerol) = an S-1,2-diacyl-sn-glyceryl-L-cysteinyl-[prolipoprotein] + sn-glycerol 1-phosphate + H(+). It functions in the pathway protein modification; lipoprotein biosynthesis (diacylglyceryl transfer). Its function is as follows. Catalyzes the transfer of the diacylglyceryl group from phosphatidylglycerol to the sulfhydryl group of the N-terminal cysteine of a prolipoprotein, the first step in the formation of mature lipoproteins. This chain is Phosphatidylglycerol--prolipoprotein diacylglyceryl transferase, found in Wolbachia pipientis subsp. Culex pipiens (strain wPip).